A 245-amino-acid polypeptide reads, in one-letter code: Carboxy-S-adenosyl-L-methionine synthase (245 aa).

S-adenosyl-L-methionine contacts are provided by residues Y42, 67–69 (GCS), 92–93 (DN), 120–121 (DI), N135, and R202.

It belongs to the class I-like SAM-binding methyltransferase superfamily. Cx-SAM synthase family. Homodimer.

It catalyses the reaction prephenate + S-adenosyl-L-methionine = carboxy-S-adenosyl-L-methionine + 3-phenylpyruvate + H2O. Functionally, catalyzes the conversion of S-adenosyl-L-methionine (SAM) to carboxy-S-adenosyl-L-methionine (Cx-SAM). In Vibrio parahaemolyticus serotype O3:K6 (strain RIMD 2210633), this protein is Carboxy-S-adenosyl-L-methionine synthase.